A 584-amino-acid chain; its full sequence is Putative adenine deaminase BA_3032/GBAA_3032/BAS2818 (584 aa).

Belongs to the metallo-dependent hydrolases superfamily. Adenine deaminase family.

It carries out the reaction adenine + H2O + H(+) = hypoxanthine + NH4(+). The protein is Putative adenine deaminase BA_3032/GBAA_3032/BAS2818 of Bacillus anthracis.